Consider the following 241-residue polypeptide: Ribosome-inactivating protein luffaculin 1 (241 aa).

Residues asparagine 28, asparagine 33, asparagine 77, and asparagine 84 are each glycosylated (N-linked (GlcNAc...) asparagine). The active site involves glutamate 159. Residue asparagine 205 is glycosylated (N-linked (GlcNAc...) asparagine).

This sequence belongs to the ribosome-inactivating protein family. Type 1 RIP subfamily.

The enzyme catalyses Endohydrolysis of the N-glycosidic bond at one specific adenosine on the 28S rRNA.. The protein is Ribosome-inactivating protein luffaculin 1 of Luffa acutangula (Ridged gourd).